Reading from the N-terminus, the 381-residue chain is Dual specificity protein phosphatase 6 (381 aa).

A Rhodanese domain is found at 30-148 (GNEQLLLMDC…FQAEFALHCE (119 aa)). The interval 176-203 (SSSDIESDLDRDPNSATDSDGSPLSNSQ) is disordered. A compositionally biased stretch (polar residues) spans 189–203 (NSATDSDGSPLSNSQ). The region spanning 206–349 (FPVEILPFLY…LLDFERTLGL (144 aa)) is the Tyrosine-protein phosphatase domain. Residue Cys293 is the Phosphocysteine intermediate of the active site.

The protein belongs to the protein-tyrosine phosphatase family. Non-receptor class dual specificity subfamily. In terms of assembly, interacts with MAPK1/ERK2. Post-translationally, ubiquitinated by the SCF(FBXO31) complex, leading to its proteasomal degradation. Expressed in lung, heart, brain, and kidney, but not significantly in skeletal muscle or testis.

Its subcellular location is the cytoplasm. It carries out the reaction O-phospho-L-tyrosyl-[protein] + H2O = L-tyrosyl-[protein] + phosphate. The enzyme catalyses O-phospho-L-seryl-[protein] + H2O = L-seryl-[protein] + phosphate. It catalyses the reaction O-phospho-L-threonyl-[protein] + H2O = L-threonyl-[protein] + phosphate. Dual specificity protein phosphatase, which mediates dephosphorylation and inactivation of MAP kinases. Has a specificity for the ERK family. Implicated in muscle and neuronal differentiation. Plays an important role in alleviating chronic postoperative pain. Necessary for the normal dephosphorylation of the long-lasting phosphorylated forms of spinal MAPK1/3 and MAP kinase p38 induced by peripheral surgery, which drives the resolution of acute postoperative allodynia. Also important for dephosphorylation of MAPK1/3 in local wound tissue, which further contributes to resolution of acute pain. The chain is Dual specificity protein phosphatase 6 (Dusp6) from Rattus norvegicus (Rat).